We begin with the raw amino-acid sequence, 542 residues long: Chaperonin GroEL 1 (542 aa).

ATP contacts are provided by residues 29-32, 86-90, Gly413, 477-479, and Asp493; these read TLGP, DGTTT, and NAA.

It belongs to the chaperonin (HSP60) family. Forms a cylinder of 14 subunits composed of two heptameric rings stacked back-to-back. Interacts with the co-chaperonin GroES.

The protein resides in the cytoplasm. It carries out the reaction ATP + H2O + a folded polypeptide = ADP + phosphate + an unfolded polypeptide.. Together with its co-chaperonin GroES, plays an essential role in assisting protein folding. The GroEL-GroES system forms a nano-cage that allows encapsulation of the non-native substrate proteins and provides a physical environment optimized to promote and accelerate protein folding. This is Chaperonin GroEL 1 from Kineococcus radiotolerans (strain ATCC BAA-149 / DSM 14245 / SRS30216).